The chain runs to 151 residues: Transcriptional repressor NrdR (151 aa).

Residues 1–24 (MRCPKCQHNGTRVLDSRPSDESRS) are disordered. A zinc finger spans residues 3–34 (CPKCQHNGTRVLDSRPSDESRSIKRRRECEKC). The span at 14-24 (LDSRPSDESRS) shows a compositional bias: basic and acidic residues. Residues 49–139 (LLIIKKDGMR…VYRQFKDINV (91 aa)) form the ATP-cone domain.

The protein belongs to the NrdR family. Zn(2+) is required as a cofactor.

Functionally, negatively regulates transcription of bacterial ribonucleotide reductase nrd genes and operons by binding to NrdR-boxes. The sequence is that of Transcriptional repressor NrdR from Shouchella clausii (strain KSM-K16) (Alkalihalobacillus clausii).